The chain runs to 656 residues: DNA mismatch repair protein MutL (656 aa).

A disordered region spans residues Asp385–Thr427. Polar residues predominate over residues Ser387–Glu410. The segment covering Lys411–Thr427 has biased composition (basic and acidic residues).

The protein belongs to the DNA mismatch repair MutL/HexB family.

Its function is as follows. This protein is involved in the repair of mismatches in DNA. It is required for dam-dependent methyl-directed DNA mismatch repair. May act as a 'molecular matchmaker', a protein that promotes the formation of a stable complex between two or more DNA-binding proteins in an ATP-dependent manner without itself being part of a final effector complex. This is DNA mismatch repair protein MutL from Lactococcus lactis subsp. cremoris (strain SK11).